Here is an 84-residue protein sequence, read N- to C-terminus: DNA-directed RNA polymerase subunit Rpo5 (84 aa).

This sequence belongs to the archaeal Rpo5/eukaryotic RPB5 RNA polymerase subunit family. Part of the RNA polymerase complex.

It is found in the cytoplasm. It carries out the reaction RNA(n) + a ribonucleoside 5'-triphosphate = RNA(n+1) + diphosphate. In terms of biological role, DNA-dependent RNA polymerase (RNAP) catalyzes the transcription of DNA into RNA using the four ribonucleoside triphosphates as substrates. This is DNA-directed RNA polymerase subunit Rpo5 from Sulfurisphaera tokodaii (strain DSM 16993 / JCM 10545 / NBRC 100140 / 7) (Sulfolobus tokodaii).